The following is a 290-amino-acid chain: Malonyl-[acyl-carrier protein] O-methyltransferase (290 aa).

It belongs to the methyltransferase superfamily.

It carries out the reaction malonyl-[ACP] + S-adenosyl-L-methionine = malonyl-[ACP] methyl ester + S-adenosyl-L-homocysteine. The protein operates within cofactor biosynthesis; biotin biosynthesis. Its function is as follows. Converts the free carboxyl group of a malonyl-thioester to its methyl ester by transfer of a methyl group from S-adenosyl-L-methionine (SAM). It allows to synthesize pimeloyl-ACP via the fatty acid synthetic pathway. The protein is Malonyl-[acyl-carrier protein] O-methyltransferase of Gallionella capsiferriformans (strain ES-2) (Gallionella ferruginea capsiferriformans (strain ES-2)).